A 144-amino-acid polypeptide reads, in one-letter code: uncharacterized protein (144 aa).

This is an uncharacterized protein from Methanocaldococcus jannaschii (strain ATCC 43067 / DSM 2661 / JAL-1 / JCM 10045 / NBRC 100440) (Methanococcus jannaschii).